The chain runs to 626 residues: Phosphomethylpyrimidine synthase (626 aa).

Residues 92 to 106 (AREVKPEDNGLKGPD) are compositionally biased toward basic and acidic residues. The segment at 92–117 (AREVKPEDNGLKGPDRSAGVPPFPNV) is disordered. Substrate contacts are provided by residues asparagine 219, methionine 248, tyrosine 277, histidine 313, 333 to 335 (SRG), 374 to 377 (DGLR), and glutamate 413. Histidine 417 is a binding site for Zn(2+). Residue tyrosine 440 coordinates substrate. Histidine 481 is a Zn(2+) binding site. Residues cysteine 561, cysteine 564, and cysteine 569 each coordinate [4Fe-4S] cluster.

This sequence belongs to the ThiC family. As to quaternary structure, homodimer. The cofactor is [4Fe-4S] cluster.

It carries out the reaction 5-amino-1-(5-phospho-beta-D-ribosyl)imidazole + S-adenosyl-L-methionine = 4-amino-2-methyl-5-(phosphooxymethyl)pyrimidine + CO + 5'-deoxyadenosine + formate + L-methionine + 3 H(+). Its pathway is cofactor biosynthesis; thiamine diphosphate biosynthesis. In terms of biological role, catalyzes the synthesis of the hydroxymethylpyrimidine phosphate (HMP-P) moiety of thiamine from aminoimidazole ribotide (AIR) in a radical S-adenosyl-L-methionine (SAM)-dependent reaction. This is Phosphomethylpyrimidine synthase from Novosphingobium aromaticivorans (strain ATCC 700278 / DSM 12444 / CCUG 56034 / CIP 105152 / NBRC 16084 / F199).